The primary structure comprises 496 residues: Probable cytosol aminopeptidase (496 aa).

The Mn(2+) site is built by Lys268 and Asp273. Lys280 is a catalytic residue. Mn(2+) contacts are provided by Asp291, Asp350, and Glu352. The active site involves Arg354.

The protein belongs to the peptidase M17 family. Mn(2+) is required as a cofactor.

It is found in the cytoplasm. It catalyses the reaction Release of an N-terminal amino acid, Xaa-|-Yaa-, in which Xaa is preferably Leu, but may be other amino acids including Pro although not Arg or Lys, and Yaa may be Pro. Amino acid amides and methyl esters are also readily hydrolyzed, but rates on arylamides are exceedingly low.. The catalysed reaction is Release of an N-terminal amino acid, preferentially leucine, but not glutamic or aspartic acids.. Its function is as follows. Presumably involved in the processing and regular turnover of intracellular proteins. Catalyzes the removal of unsubstituted N-terminal amino acids from various peptides. The protein is Probable cytosol aminopeptidase of Thioalkalivibrio sulfidiphilus (strain HL-EbGR7).